A 418-amino-acid polypeptide reads, in one-letter code: Bile acid-CoA:amino acid N-acyltransferase (418 aa).

At Ser125 the chain carries Phosphoserine. Catalysis depends on charge relay system residues Cys235, Asp328, and His362. Ser416 carries the phosphoserine modification.

It belongs to the C/M/P thioester hydrolase family. In terms of assembly, monomer. In terms of tissue distribution, expressed in the gallbladder mucosa and pancreas. Expressed in hepatocytes (at protein level).

The protein resides in the cytoplasm. It localises to the cytosol. The protein localises to the peroxisome. The enzyme catalyses choloyl-CoA + glycine = glycocholate + CoA + H(+). It catalyses the reaction hexadecanoyl-CoA + H2O = hexadecanoate + CoA + H(+). The catalysed reaction is choloyl-CoA + H2O = cholate + CoA + H(+). It carries out the reaction chenodeoxycholoyl-CoA + H2O = chenodeoxycholate + CoA + H(+). The enzyme catalyses eicosanoyl-CoA + H2O = eicosanoate + CoA + H(+). It catalyses the reaction octadecanoyl-CoA + H2O = octadecanoate + CoA + H(+). The catalysed reaction is docosanoyl-CoA + H2O = docosanoate + CoA + H(+). It carries out the reaction tetracosanoyl-CoA + H2O = tetracosanoate + CoA + H(+). The enzyme catalyses hexacosanoyl-CoA + H2O = hexacosanoate + CoA + H(+). It catalyses the reaction dodecanoyl-CoA + H2O = dodecanoate + CoA + H(+). The catalysed reaction is tetradecanoyl-CoA + H2O = tetradecanoate + CoA + H(+). It carries out the reaction choloyl-CoA + taurine = taurocholate + CoA + H(+). The enzyme catalyses chenodeoxycholoyl-CoA + glycine = glycochenodeoxycholate + CoA + H(+). It catalyses the reaction chenodeoxycholoyl-CoA + taurine = taurochenodeoxycholate + CoA + H(+). The catalysed reaction is eicosanoyl-CoA + glycine = N-eicosanoylglycinate + CoA + H(+). It carries out the reaction hexacosanoyl-CoA + glycine = N-hexacosanoylglycine + CoA + H(+). The enzyme catalyses docosanoyl-CoA + glycine = N-docosanoylglycine + CoA + H(+). Its function is as follows. Catalyzes the amidation of bile acids (BAs) with the amino acids taurine and glycine. More than 95% of the BAs are N-acyl amidates with glycine and taurine. Amidation of BAs in the liver with glycine or taurine prior to their excretion into bile is an important biochemical event in bile acid metabolism. This conjugation (or amidation) plays several important biological roles in that it promotes the secretion of BAs and cholesterol into bile and increases the detergent properties of BAs in the intestine, which facilitates lipid and vitamin absorption. May also act as an acyl-CoA thioesterase that regulates intracellular levels of free fatty acids. In vitro, catalyzes the hydrolysis of long- and very long-chain saturated acyl-CoAs to the free fatty acid and coenzyme A (CoASH), and conjugates glycine to these acyl-CoAs. The sequence is that of Bile acid-CoA:amino acid N-acyltransferase (BAAT) from Homo sapiens (Human).